A 671-amino-acid polypeptide reads, in one-letter code: UvrABC system protein B (671 aa).

The 158-residue stretch at 26 to 183 (EGLENGLAHQ…RRLSELQYSR (158 aa)) folds into the Helicase ATP-binding domain. Position 39–46 (39–46 (GVTGSGKT)) interacts with ATP. Positions 92–115 (YYDYYQPEAYVPSSDTFIEKDASV) match the Beta-hairpin motif. The 163-residue stretch at 431–593 (QVDDLLSEIR…IIPQGLNKKI (163 aa)) folds into the Helicase C-terminal domain. In terms of domain architecture, UVR spans 631–666 (DQKIRELEAKMYTYAQNLEFEQAAELRDQVHQLRQQ).

This sequence belongs to the UvrB family. In terms of assembly, forms a heterotetramer with UvrA during the search for lesions. Interacts with UvrC in an incision complex.

It is found in the cytoplasm. Its function is as follows. The UvrABC repair system catalyzes the recognition and processing of DNA lesions. A damage recognition complex composed of 2 UvrA and 2 UvrB subunits scans DNA for abnormalities. Upon binding of the UvrA(2)B(2) complex to a putative damaged site, the DNA wraps around one UvrB monomer. DNA wrap is dependent on ATP binding by UvrB and probably causes local melting of the DNA helix, facilitating insertion of UvrB beta-hairpin between the DNA strands. Then UvrB probes one DNA strand for the presence of a lesion. If a lesion is found the UvrA subunits dissociate and the UvrB-DNA preincision complex is formed. This complex is subsequently bound by UvrC and the second UvrB is released. If no lesion is found, the DNA wraps around the other UvrB subunit that will check the other stand for damage. In Yersinia pestis bv. Antiqua (strain Antiqua), this protein is UvrABC system protein B.